Reading from the N-terminus, the 119-residue chain is Large ribosomal subunit protein bL20 (119 aa).

The protein belongs to the bacterial ribosomal protein bL20 family.

Its function is as follows. Binds directly to 23S ribosomal RNA and is necessary for the in vitro assembly process of the 50S ribosomal subunit. It is not involved in the protein synthesizing functions of that subunit. The protein is Large ribosomal subunit protein bL20 of Geobacillus kaustophilus (strain HTA426).